An 86-amino-acid chain; its full sequence is Translation initiation factor IF-1 2 (86 aa).

The S1-like domain occupies 1–72 (MAKEELLEME…TKARISFRHK (72 aa)).

Belongs to the IF-1 family. In terms of assembly, component of the 30S ribosomal translation pre-initiation complex which assembles on the 30S ribosome in the order IF-2 and IF-3, IF-1 and N-formylmethionyl-tRNA(fMet); mRNA recruitment can occur at any time during PIC assembly.

The protein resides in the cytoplasm. Functionally, one of the essential components for the initiation of protein synthesis. Stabilizes the binding of IF-2 and IF-3 on the 30S subunit to which N-formylmethionyl-tRNA(fMet) subsequently binds. Helps modulate mRNA selection, yielding the 30S pre-initiation complex (PIC). Upon addition of the 50S ribosomal subunit IF-1, IF-2 and IF-3 are released leaving the mature 70S translation initiation complex. The protein is Translation initiation factor IF-1 2 of Aromatoleum aromaticum (strain DSM 19018 / LMG 30748 / EbN1) (Azoarcus sp. (strain EbN1)).